The following is a 636-amino-acid chain: Threonine--tRNA ligase (636 aa).

Residues 1–63 enclose the TGS domain; that stretch reads MSSISIALPD…KDDSRVEIIT (63 aa). The catalytic stretch occupies residues 243–534; the sequence is DHRRLGRELD…LIEHYAGNFP (292 aa). The Zn(2+) site is built by C335, H386, and H511.

It belongs to the class-II aminoacyl-tRNA synthetase family. In terms of assembly, homodimer. It depends on Zn(2+) as a cofactor.

The protein localises to the cytoplasm. The catalysed reaction is tRNA(Thr) + L-threonine + ATP = L-threonyl-tRNA(Thr) + AMP + diphosphate + H(+). Functionally, catalyzes the attachment of threonine to tRNA(Thr) in a two-step reaction: L-threonine is first activated by ATP to form Thr-AMP and then transferred to the acceptor end of tRNA(Thr). Also edits incorrectly charged L-seryl-tRNA(Thr). In Pelobacter propionicus (strain DSM 2379 / NBRC 103807 / OttBd1), this protein is Threonine--tRNA ligase.